Consider the following 498-residue polypeptide: Lysine--tRNA ligase (498 aa).

Mg(2+) contacts are provided by E407 and E414.

Belongs to the class-II aminoacyl-tRNA synthetase family. Homodimer. Mg(2+) is required as a cofactor.

Its subcellular location is the cytoplasm. The enzyme catalyses tRNA(Lys) + L-lysine + ATP = L-lysyl-tRNA(Lys) + AMP + diphosphate. The polypeptide is Lysine--tRNA ligase (lysS) (Rhizobium meliloti (strain 1021) (Ensifer meliloti)).